A 323-amino-acid polypeptide reads, in one-letter code: MVTILDTINPDAKRVRHPEKAHRPDTEVMRKPDWIRVKAPTSKGYAETRAIVKEHKLVTVCEEAGCPNIGECWDKKHATFMIMGEICTRACAFCNVATGKPNALDMAEPENVAKAVKEMGLSHVVITSVDRDDLEDGGAEHFEKVIWAIRAASPATTIEILTPDFLKKPGALERVVAAKPDVFNHNMETVAGNYLTVRPGARYFHSIRLLQRVKELDPTMFTKSGIMVGLGEERNEVLQLMDDLRTADVDFLTIGQYLQPTRKHHKVESFVTPDEFKSYETVAYSKGFLMVASSPLTRSSHHAGDDFARLRAAREKKLLVAAE.

Cys-61, Cys-66, Cys-72, Cys-87, Cys-91, Cys-94, and Ser-300 together coordinate [4Fe-4S] cluster. The Radical SAM core domain occupies 73 to 289; that stretch reads WDKKHATFMI…ETVAYSKGFL (217 aa).

This sequence belongs to the radical SAM superfamily. Lipoyl synthase family. It depends on [4Fe-4S] cluster as a cofactor.

Its subcellular location is the cytoplasm. It carries out the reaction [[Fe-S] cluster scaffold protein carrying a second [4Fe-4S](2+) cluster] + N(6)-octanoyl-L-lysyl-[protein] + 2 oxidized [2Fe-2S]-[ferredoxin] + 2 S-adenosyl-L-methionine + 4 H(+) = [[Fe-S] cluster scaffold protein] + N(6)-[(R)-dihydrolipoyl]-L-lysyl-[protein] + 4 Fe(3+) + 2 hydrogen sulfide + 2 5'-deoxyadenosine + 2 L-methionine + 2 reduced [2Fe-2S]-[ferredoxin]. Its pathway is protein modification; protein lipoylation via endogenous pathway; protein N(6)-(lipoyl)lysine from octanoyl-[acyl-carrier-protein]: step 2/2. Its function is as follows. Catalyzes the radical-mediated insertion of two sulfur atoms into the C-6 and C-8 positions of the octanoyl moiety bound to the lipoyl domains of lipoate-dependent enzymes, thereby converting the octanoylated domains into lipoylated derivatives. The polypeptide is Lipoyl synthase (Rhizobium etli (strain CIAT 652)).